Reading from the N-terminus, the 675-residue chain is Protein C-mannosyl-transferase DPY19L1 (675 aa).

Positions 1 to 22 are disordered; it reads MEGRPPPEGRPPPRPRTGRAPR. The next 11 membrane-spanning stretches (helical) occupy residues 66-88, 156-176, 186-208, 236-254, 260-279, 286-303, 309-325, 334-354, 414-434, 449-469, and 491-511; these read LYYS…WMIM, ACFY…LFFI, LGGL…VMWT, LYRG…FMLP, FVLL…GYID, IIYI…LMFG, TSYY…ILAM, VSEL…TVIL, VVLV…WGVL, GELV…ILIM, and LFGW…ILAA.

This sequence belongs to the dpy-19 family. In terms of tissue distribution, widely expressed.

Its subcellular location is the endoplasmic reticulum membrane. The enzyme catalyses L-tryptophyl-[protein] + a di-trans,poly-cis-dolichyl beta-D-mannosyl phosphate = C-alpha-D-mannosyl-L-tryptophyl-[protein] + a di-trans,poly-cis-dolichyl phosphate + H(+). Its pathway is protein modification; protein glycosylation. C-mannosyltransferase that mediates the C-mannosylation tryptophan residues on target proteins. The reaction occurs on the luminal side of the endoplasmic reticulum and involves the transfer of a mannose unit from a dolichylphosphate mannose (Dol-P-Man) donor to an acceptor protein containing a WxxW consensus sequence. C-mannosylates the first two tryptophans in the WxxWxxWxxC motif in thrombospondin (TSP) type-1 of UNC5A. Regulates neurite extension during development. This is Protein C-mannosyl-transferase DPY19L1 (DPY19L1) from Homo sapiens (Human).